Reading from the N-terminus, the 119-residue chain is Large ribosomal subunit protein uL14 (119 aa).

The protein belongs to the universal ribosomal protein uL14 family. In terms of assembly, part of the 50S ribosomal subunit. Forms a cluster with proteins L3 and L19. In the 70S ribosome, L14 and L19 interact and together make contacts with the 16S rRNA in bridges B5 and B8.

Functionally, binds to 23S rRNA. Forms part of two intersubunit bridges in the 70S ribosome. The protein is Large ribosomal subunit protein uL14 of Ehrlichia canis (strain Jake).